The following is a 100-amino-acid chain: Class II hydrophobin FOXG_02746 (100 aa).

The first 17 residues, methionine 1 to alanine 17, serve as a signal peptide directing secretion. Disulfide bonds link cysteine 29–cysteine 79, cysteine 40–cysteine 70, cysteine 41–cysteine 53, and cysteine 80–cysteine 92.

Belongs to the cerato-ulmin hydrophobin family. As to quaternary structure, homodimer. Homodimers further self-assemble to form highly ordered films at water-air interfaces through intermolecular interactions.

Its subcellular location is the secreted. It is found in the cell wall. Its function is as follows. Aerial growth, conidiation, and dispersal of filamentous fungi in the environment rely upon a capability of their secreting small amphipathic proteins called hydrophobins (HPBs) with low sequence identity. Class I can self-assemble into an outermost layer of rodlet bundles on aerial cell surfaces, conferring cellular hydrophobicity that supports fungal growth, development and dispersal; whereas Class II form highly ordered films at water-air interfaces through intermolecular interactions but contribute nothing to the rodlet structure. FOXG_02746 is a class II hydrophobin that is likely required for plant colonization. The polypeptide is Class II hydrophobin FOXG_02746 (Fusarium oxysporum f. sp. lycopersici (strain 4287 / CBS 123668 / FGSC 9935 / NRRL 34936) (Fusarium vascular wilt of tomato)).